The primary structure comprises 560 residues: MFS siderochrome iron transporter 1 (560 aa).

An N-linked (GlcNAc...) asparagine glycan is attached at Asn-29. The next 11 helical transmembrane spans lie at Leu-53–Val-73, Leu-90–Ala-110, Val-115–Met-135, Val-146–Met-166, Met-177–Gly-194, Phe-211–Phe-231, Val-264–Val-284, Trp-291–Leu-311, Pro-331–Ile-351, Ala-354–Leu-374, and Phe-379–Pro-399. An N-linked (GlcNAc...) asparagine glycan is attached at Asn-404. The next 3 membrane-spanning stretches (helical) occupy residues Ile-407–Cys-427, Val-441–Ala-461, and Val-522–Val-542.

Belongs to the major facilitator superfamily.

The protein localises to the membrane. Functionally, major facilitator transporter involved in siderophore transport. This is MFS siderochrome iron transporter 1 from Ajellomyces capsulatus (Darling's disease fungus).